Here is a 295-residue protein sequence, read N- to C-terminus: Small ribosomal subunit protein uS2 (295 aa).

Positions 247–295 (TDKGLTSKNVSKLKQTKKFSKTKNIDEETNTEFEQALNDADENKNSDNA) are disordered.

This sequence belongs to the universal ribosomal protein uS2 family.

The sequence is that of Small ribosomal subunit protein uS2 from Rickettsia conorii (strain ATCC VR-613 / Malish 7).